A 506-amino-acid chain; its full sequence is Catalase (506 aa).

Active-site residues include H73 and N146. Y356 contributes to the heme binding site. The short motif at 504-506 (SKF) is the Microbody targeting signal element.

Belongs to the catalase family. As to quaternary structure, homotetramer. Requires heme as cofactor.

It localises to the peroxisome matrix. It carries out the reaction 2 H2O2 = O2 + 2 H2O. In terms of biological role, catalyzes the degradation of hydrogen peroxide (H(2)O(2)) generated by peroxisomal oxidases to water and oxygen, thereby protecting cells from the toxic effects of hydrogen peroxide. The protein is Catalase (Cat) of Drosophila melanogaster (Fruit fly).